Here is a 1546-residue protein sequence, read N- to C-terminus: Hybrid signal transduction histidine kinase D (1546 aa).

Positions 36–63 form a coiled coil; it reads MRKQKPDHEKTREELIEEINHLRAVSNS. The region spanning 65 to 131 is the PAS domain; that stretch reads KNARIMLDEM…NIDNVREAVH (67 aa). The region spanning 139–193 is the PAC domain; sequence IRYETEIFGKSAGTEKITIDFSLMPLFNDKGEVSLILPEGRNITEKRLGELEIER. One can recognise a Histidine kinase 1 domain in the interval 218–440; that stretch reads NVSHELRTPL…QFTLRLPLTP (223 aa). Histidine 221 carries the post-translational modification Phosphohistidine; by autocatalysis. A Response regulatory 1 domain is found at 571 to 686; that stretch reads IVLVVEDNPE…ELVARVVNLM (116 aa). The residue at position 619 (aspartate 619) is a 4-aspartylphosphate. Positions 747–1010 constitute a Histidine kinase 2 domain; it reads NLSHELRTPL…QFTVVLPIIK (264 aa). At histidine 750 the chain carries Phosphohistidine; by autocatalysis. Low complexity-rich tracts occupy residues 1013–1031 and 1042–1146; these read SSSNSSPSNQLSCSSSPPL and NYIN…SNNN. Disordered regions lie at residues 1013 to 1148, 1266 to 1285, and 1313 to 1350; these read SSSN…NNEK, NNSNNDDNSNNTTIPTPPSS, and PLSELKSSSNNNNNNNNNSNNNNNNSMSPNLRSPKANS. Low complexity predominate over residues 1313-1346; sequence PLSELKSSSNNNNNNNNNSNNNNNNSMSPNLRSP. The Response regulatory 2 domain occupies 1359–1483; the sequence is QIMLVDDLEE…ELSNSILTLI (125 aa). Aspartate 1412 bears the 4-aspartylphosphate mark. A disordered region spans residues 1500 to 1546; it reads QNNNNNNNNNNNNNNNNNNNNNNINNGNDDDSLLLTDSRPCKKANSQ. Positions 1501-1526 are enriched in low complexity; the sequence is NNNNNNNNNNNNNNNNNNNNNNINNG.

It catalyses the reaction ATP + protein L-histidine = ADP + protein N-phospho-L-histidine.. Its function is as follows. Acts as a receptor histidine kinase for a signal transduction pathway. This protein undergoes an ATP-dependent autophosphorylation at a conserved histidine residue in the kinase core, and a phosphoryl group is then transferred to a conserved aspartate residue in the receiver domain. This Dictyostelium discoideum (Social amoeba) protein is Hybrid signal transduction histidine kinase D (dhkD).